The sequence spans 125 residues: Small ribosomal subunit protein bS6 (125 aa).

A disordered region spans residues valine 96 to glutamate 125. Residues alanine 104–alanine 113 are compositionally biased toward basic and acidic residues. The span at glutamate 116 to glutamate 125 shows a compositional bias: acidic residues.

This sequence belongs to the bacterial ribosomal protein bS6 family.

Binds together with bS18 to 16S ribosomal RNA. The protein is Small ribosomal subunit protein bS6 of Haemophilus influenzae (strain 86-028NP).